We begin with the raw amino-acid sequence, 375 residues long: Chaperone protein DnaJ 1 (375 aa).

The J domain occupies 4 to 68 (DYYAILGVER…EKRRIVDMGG (65 aa)). The CR-type zinc finger occupies 127–209 (GTKKPITIDT…CGGDGRVRTQ (83 aa)). Cys-140, Cys-143, Cys-157, Cys-160, Cys-183, Cys-186, Cys-197, and Cys-200 together coordinate Zn(2+). 4 CXXCXGXG motif repeats span residues 140-147 (CDRCEGTG), 157-164 (CSTCNGSG), 183-190 (CPTCRGTG), and 197-204 (CDKCGGDG).

This sequence belongs to the DnaJ family. In terms of assembly, homodimer. Zn(2+) serves as cofactor.

The protein resides in the cytoplasm. Its function is as follows. Participates actively in the response to hyperosmotic and heat shock by preventing the aggregation of stress-denatured proteins and by disaggregating proteins, also in an autonomous, DnaK-independent fashion. Unfolded proteins bind initially to DnaJ; upon interaction with the DnaJ-bound protein, DnaK hydrolyzes its bound ATP, resulting in the formation of a stable complex. GrpE releases ADP from DnaK; ATP binding to DnaK triggers the release of the substrate protein, thus completing the reaction cycle. Several rounds of ATP-dependent interactions between DnaJ, DnaK and GrpE are required for fully efficient folding. Also involved, together with DnaK and GrpE, in the DNA replication of plasmids through activation of initiation proteins. The sequence is that of Chaperone protein DnaJ 1 from Corynebacterium diphtheriae (strain ATCC 700971 / NCTC 13129 / Biotype gravis).